Consider the following 77-residue polypeptide: UPF0291 protein OB1671 (77 aa).

Residues 56–77 are disordered; the sequence is DPEGKDVTPQKLRDYQDRNKKH. Basic and acidic residues predominate over residues 57-77; that stretch reads PEGKDVTPQKLRDYQDRNKKH.

The protein belongs to the UPF0291 family.

The protein localises to the cytoplasm. This Oceanobacillus iheyensis (strain DSM 14371 / CIP 107618 / JCM 11309 / KCTC 3954 / HTE831) protein is UPF0291 protein OB1671.